The primary structure comprises 140 residues: Protein BIC1 (140 aa).

Residues 1–10 (MMNIDDTTSP) are compositionally biased toward polar residues. Residues 1–71 (MMNIDDTTSP…RVDTGRERLK (71 aa)) are disordered. The span at 42–68 (ADKKDLALLEEKPKQSQEEDRVDTGRE) shows a compositional bias: basic and acidic residues.

In terms of assembly, interacts with CRY2 in both darkness and light.

The protein localises to the nucleus. Its function is as follows. Regulates the blue-light dependent dimerization of CRY2 and formation of photobodies. Interacts with photoexited CRY2 to inhibit its activity. Inhibits CRY phosphorylation. The polypeptide is Protein BIC1 (Arabidopsis thaliana (Mouse-ear cress)).